The primary structure comprises 435 residues: U-box domain-containing protein 21 (435 aa).

The U-box domain occupies 30-104 (TIPPEFQCPI…QGWCVEKGSP (75 aa)). ARM repeat units lie at residues 202–241 (LEGI…EILS), 245–285 (TRVH…QMVL), 288–327 (PEIA…AICE), and 329–369 (EHGR…KLWK).

The catalysed reaction is S-ubiquitinyl-[E2 ubiquitin-conjugating enzyme]-L-cysteine + [acceptor protein]-L-lysine = [E2 ubiquitin-conjugating enzyme]-L-cysteine + N(6)-ubiquitinyl-[acceptor protein]-L-lysine.. It functions in the pathway protein modification; protein ubiquitination. Functions as an E3 ubiquitin ligase. The sequence is that of U-box domain-containing protein 21 (PUB21) from Arabidopsis thaliana (Mouse-ear cress).